The primary structure comprises 94 residues: Large ribosomal subunit protein uL23 (94 aa).

Belongs to the universal ribosomal protein uL23 family. In terms of assembly, part of the 50S ribosomal subunit. Contacts protein L29, and trigger factor when it is bound to the ribosome.

One of the early assembly proteins it binds 23S rRNA. One of the proteins that surrounds the polypeptide exit tunnel on the outside of the ribosome. Forms the main docking site for trigger factor binding to the ribosome. This is Large ribosomal subunit protein uL23 from Akkermansia muciniphila (strain ATCC BAA-835 / DSM 22959 / JCM 33894 / BCRC 81048 / CCUG 64013 / CIP 107961 / Muc).